A 323-amino-acid polypeptide reads, in one-letter code: tRNA dimethylallyltransferase (323 aa).

12–19 contacts ATP; sequence GPTAAGKT. Substrate is bound at residue 14 to 19; it reads TAAGKT. Interaction with substrate tRNA stretches follow at residues 37 to 40 and 161 to 165; these read DSAL and QRLMR.

It belongs to the IPP transferase family. As to quaternary structure, monomer. The cofactor is Mg(2+).

It catalyses the reaction adenosine(37) in tRNA + dimethylallyl diphosphate = N(6)-dimethylallyladenosine(37) in tRNA + diphosphate. Functionally, catalyzes the transfer of a dimethylallyl group onto the adenine at position 37 in tRNAs that read codons beginning with uridine, leading to the formation of N6-(dimethylallyl)adenosine (i(6)A). The sequence is that of tRNA dimethylallyltransferase from Pseudomonas aeruginosa (strain LESB58).